A 204-amino-acid chain; its full sequence is GTP cyclohydrolase 1 (204 aa).

Zn(2+)-binding residues include Cys92, His95, and Cys165.

Belongs to the GTP cyclohydrolase I family. In terms of assembly, homomer.

The enzyme catalyses GTP + H2O = 7,8-dihydroneopterin 3'-triphosphate + formate + H(+). Its pathway is cofactor biosynthesis; 7,8-dihydroneopterin triphosphate biosynthesis; 7,8-dihydroneopterin triphosphate from GTP: step 1/1. The chain is GTP cyclohydrolase 1 from Mycobacteroides abscessus (strain ATCC 19977 / DSM 44196 / CCUG 20993 / CIP 104536 / JCM 13569 / NCTC 13031 / TMC 1543 / L948) (Mycobacterium abscessus).